We begin with the raw amino-acid sequence, 117 residues long: Non-specific lipid-transfer protein 1 (117 aa).

A signal peptide spans 1-25 (MAGLVKLSCLVLACMIVAGPIATNA). Cystine bridges form between cysteine 29-cysteine 76, cysteine 39-cysteine 53, cysteine 54-cysteine 99, and cysteine 74-cysteine 113.

It belongs to the plant LTP family.

In terms of biological role, plant non-specific lipid-transfer proteins transfer phospholipids as well as galactolipids across membranes. May play a role in wax or cutin deposition in the cell walls of expanding epidermal cells and certain secretory tissues. This chain is Non-specific lipid-transfer protein 1 (LTP1), found in Brassica napus (Rape).